The primary structure comprises 372 residues: MAKQYDSVECPFCDEVSKYEKLAKIGQGTFGEVFKARHRKTGQKVALKKVLMENEKEGFPITALREIKILQLLKHENVVNLIEICRTKASPYNRCKGSIYLVFDFCEHDLAGLLSNVLVKFTLSEIKRVMQMLLNGLYYIHRNKILHRDMKAANVLITRDGVLKLADFGLARAFSLAKNSQPNRYTNRVVTLWYRPPELLLGERDYGPPIDLWGAGCIMAEMWTRSPIMQGNTEQHQLALISQLCGSITPEVWPNVDNYELYEKLELVKGQKRKVKDRLKAYVRDPYALDLIDKLLVLDPAQRIDSDDALNHDFFWSDPMPSDLKGMLSTHLTSMFEYLAPPRRKGSQITQQSTNQSRNPATTNQTEFERVF.

Positions 19 to 315 constitute a Protein kinase domain; the sequence is YEKLAKIGQG…SDDALNHDFF (297 aa). ATP is bound at residue 25–33; the sequence is IGQGTFGEV. Lys-35 carries the phosphoserine modification. The residue at position 44 (Lys-44) is an N6-acetyllysine; by EP300/CBP, PCAF/KAT2B and GCN5/KAT2A. Position 48 (Lys-48) interacts with ATP. At Lys-48 the chain carries N6-acetyllysine; by PCAF/KAT2B and GCN5/KAT2A. Phosphothreonine is present on Asn-54. An ATP-binding site is contributed by 104–106; that stretch reads DFC. Asp-149 serves as the catalytic Proton acceptor. Residues 166–191 are T-loop; it reads ADFGLARAFSLAKNSQPNRYTNRVVT. Asp-167 serves as a coordination point for ATP. The residue at position 175 (Ser-175) is a Phosphoserine. Phosphothreonine; by CaMK1D is present on Thr-186. Residues 343–372 form a disordered region; the sequence is RRKGSQITQQSTNQSRNPATTNQTEFERVF. A Phosphoserine; by CDK9 and PKA modification is found at Ser-347. Residues 347 to 366 show a composition bias toward polar residues; the sequence is SQITQQSTNQSRNPATTNQT. Thr-350 is modified (phosphothreonine; by CDK9). Ser-353 carries the phosphoserine; by CDK9 modification. Residue Thr-354 is modified to Phosphothreonine; by CDK9. Residue Ser-357 is modified to Phosphoserine; by CDK9. Phosphothreonine; by CDK9 is present on residues Thr-362 and Thr-363.

This sequence belongs to the protein kinase superfamily. CMGC Ser/Thr protein kinase family. CDC2/CDKX subfamily. Component of the super elongation complex (SEC), at least composed of EAF1, EAF2, CDK9, MLLT3/AF9, AFF (AFF1 or AFF4), the P-TEFb complex and ELL (ELL, ELL2 or ELL3). Associates with CCNT1/cyclin-T1, CCNT2/cyclin-T2 (isoform A and isoform B) or CCNK/cyclin-K to form active P-TEFb. P-TEFb forms a complex with AFF4/AF5Q31 and is part of the super elongation complex (SEC). Component of a complex which is composed of at least 5 members: HTATSF1/Tat-SF1, P-TEFb complex, RNA pol II, SUPT5H and NCL/nucleolin. Associates with UBR5 and forms a transcription regulatory complex composed of CDK9, RNAP II, UBR5 and TFIIS/TCEA1 that can stimulate target gene transcription (e.g. gamma fibrinogen/FGG) by recruiting their promoters. Component of the 7SK snRNP inactive complex which is composed of at least 8 members: P-TEFb (composed of CDK9 and CCNT1/cyclin-T1), HEXIM1, HEXIM2, LARP7, BCDIN3, SART3 proteins and 7SK and U6 snRNAs. This inactive 7SK snRNP complex can also interact with NCOR1 and HDAC3, probably to regulate CDK9 acetylation. Release of P-TEFb from P-TEFb/7SK snRNP complex requires both PP2B to transduce calcium Ca(2+) signaling in response to stimuli (e.g. UV or hexamethylene bisacetamide (HMBA)) and PPP1CA to dephosphorylate Thr-186. This released P-TEFb remains inactive in the pre-initiation complex with BRD4 until new Thr-186 phosphorylation occurs after the synthesis of a short RNA. Interacts with BRD4; to target chromatin binding. Interacts with JMJD6. Interacts with activated nuclear STAT3 and RELA/p65. Binds to AR and MYOD1. Forms a complex composed of CDK9, CCNT1/cyclin-T1, EP300 and GATA4 that stimulates hypertrophy in cardiomyocytes. The large PER complex involved in the repression of transcriptional termination is composed of at least PER2, CDK9, DDX5, DHX9, NCBP1 and POLR2A. Interacts with HSF1. Interacts with TBX21. Isoform 3: binds to KU70/XRCC6. Interacts with WDR43. Interacts with ZMYND8; the association appears to occur between homodimeric ZMYND8 and the activated form of the P-TEFb complex. In terms of assembly, (Microbial infection) Interacts with the acidic/proline-rich region of HIV-1 and HIV-2 Tat via T-loop region and is thus required for HIV to hijack host transcription machinery during its replication through cooperative binding to viral TAR RNA. As to quaternary structure, (Microbial infection) Interacts with human herpes virus 1 (HHV-1) protein ICP22; this interaction blocks the recruitment of positive transcription elongation factor b (P-TEFb) to the viral promoter. In terms of processing, autophosphorylation at Thr-186, Ser-347, Thr-350, Ser-353, Thr-354 and Ser-357 triggers kinase activity by promoting cyclin and substrate binding (e.g. HIV TAT) upon conformational changes. Thr-186 phosphorylation requires the calcium Ca(2+) signaling pathway, including CaMK1D and calmodulin. This inhibition is relieved by Thr-29 dephosphorylation. However, phosphorylation at Thr-29 is inhibitory within the HIV transcription initiation complex. Phosphorylation at Ser-175 inhibits kinase activity. Can be phosphorylated on either Thr-362 or Thr-363 but not on both simultaneously. Dephosphorylation of Thr-186 by PPM1A and PPM1B blocks CDK9 activity and may lead to CDK9 proteasomal degradation. However, PPP1CA-mediated Thr-186 dephosphorylation is required to release P-TEFb from its inactive P-TEFb/7SK snRNP complex. Dephosphorylated at Ser-347 by the PNUTS-PP1 complex during RNA polymerase II transcription pause-release. Dephosphorylation of C-terminus Thr and Ser residues by protein phosphatase-1 (PP1) triggers CDK9 activity, contributing to the activation of HIV-1 transcription. Post-translationally, N6-acetylation of Lys-44 promotes kinase activity, whereas acetylation of both Lys-44 and Lys-48 mediated by PCAF/KAT2B and GCN5/KAT2A reduces kinase activity. The acetylated form associates with PML bodies in the nuclear matrix and with the transcriptionally silent HIV-1 genome; deacetylated upon transcription stimulation. Deacetylated by SIRT7, promoting the kinase activity and subsequent 'Ser-2' phosphorylation of the C-terminal domain (CTD) of RNA polymerase II. In terms of processing, polyubiquitinated and thus activated by UBR5. This ubiquitination is promoted by TFIIS/TCEA1 and favors 'Ser-2' phosphorylation of RPB1/POLR2A CTD. As to expression, ubiquitous.

The protein resides in the nucleus. It localises to the cytoplasm. Its subcellular location is the PML body. It catalyses the reaction L-seryl-[protein] + ATP = O-phospho-L-seryl-[protein] + ADP + H(+). The catalysed reaction is L-threonyl-[protein] + ATP = O-phospho-L-threonyl-[protein] + ADP + H(+). It carries out the reaction [DNA-directed RNA polymerase] + ATP = phospho-[DNA-directed RNA polymerase] + ADP + H(+). Inhibited by CDKI-71, CR8, GPC-286199, AG-024322, flavopiridol (alvocidib), RBG-286147, anilinopyrimidine 32, arylazopyrazole 31b, indirubin 3'-monoxime, meriolin 3,P276-00, olomoucine II, pyrazolotriazine, meriolin, variolin, thiazolyl-pyrimidine, thiazolyl-pyrimidine, indirubin-30-monoxime, ZK 304709, AG-012986, AT7519, R547, RGB-286638, imidazole pyrimidine, EXEL-3700, EXEL-8647, 5,6-dichloro-1-b-ribofur-anosyl-benzimidazole (DRB), P276-00, roscovitine (seliciclib, CYC202) and SNS-032 (BMS-387032). Activation by Thr-186 phosphorylation is calcium Ca(2+) signaling pathway-dependent; actively inactivated by dephosphorylation mediated by PPP1CA, PPM1A and PPM1B. Reversibly repressed by acetylation at Lys-44 and Lys-48. In terms of biological role, protein kinase involved in the regulation of transcription. Member of the cyclin-dependent kinase pair (CDK9/cyclin-T) complex, also called positive transcription elongation factor b (P-TEFb), which facilitates the transition from abortive to productive elongation by phosphorylating the CTD (C-terminal domain) of the large subunit of RNA polymerase II (RNAP II) POLR2A, SUPT5H and RDBP. This complex is inactive when in the 7SK snRNP complex form. Phosphorylates EP300, MYOD1, RPB1/POLR2A and AR and the negative elongation factors DSIF and NELFE. Regulates cytokine inducible transcription networks by facilitating promoter recognition of target transcription factors (e.g. TNF-inducible RELA/p65 activation and IL-6-inducible STAT3 signaling). Promotes RNA synthesis in genetic programs for cell growth, differentiation and viral pathogenesis. P-TEFb is also involved in cotranscriptional histone modification, mRNA processing and mRNA export. Modulates a complex network of chromatin modifications including histone H2B monoubiquitination (H2Bub1), H3 lysine 4 trimethylation (H3K4me3) and H3K36me3; integrates phosphorylation during transcription with chromatin modifications to control co-transcriptional histone mRNA processing. The CDK9/cyclin-K complex has also a kinase activity towards CTD of RNAP II and can substitute for CDK9/cyclin-T P-TEFb in vitro. Replication stress response protein; the CDK9/cyclin-K complex is required for genome integrity maintenance, by promoting cell cycle recovery from replication arrest and limiting single-stranded DNA amount in response to replication stress, thus reducing the breakdown of stalled replication forks and avoiding DNA damage. In addition, probable function in DNA repair of isoform 2 via interaction with KU70/XRCC6. Promotes cardiac myocyte enlargement. RPB1/POLR2A phosphorylation on 'Ser-2' in CTD activates transcription. AR phosphorylation modulates AR transcription factor promoter selectivity and cell growth. DSIF and NELF phosphorylation promotes transcription by inhibiting their negative effect. The phosphorylation of MYOD1 enhances its transcriptional activity and thus promotes muscle differentiation. Catalyzes phosphorylation of KAT5, promoting KAT5 recruitment to chromatin and histone acetyltransferase activity. This Homo sapiens (Human) protein is Cyclin-dependent kinase 9.